Reading from the N-terminus, the 108-residue chain is UPF0145 protein AF_0869 (108 aa).

It belongs to the UPF0145 family.

The protein is UPF0145 protein AF_0869 of Archaeoglobus fulgidus (strain ATCC 49558 / DSM 4304 / JCM 9628 / NBRC 100126 / VC-16).